The sequence spans 194 residues: Holliday junction branch migration complex subunit RuvA (194 aa).

The segment at 1–61 (MYDFLTGIIK…DNQISLYGFK (61 aa)) is domain I. The interval 62-139 (TVKERNLFQK…GDFSKNIAPM (78 aa)) is domain II. The tract at residues 139 to 143 (MKNLL) is flexible linker. The interval 144–194 (ENSAELDDALAALVALGFSSKEVNKINPKLASLGELTTDAYIQKGLKLLTK) is domain III.

It belongs to the RuvA family. As to quaternary structure, homotetramer. Forms an RuvA(8)-RuvB(12)-Holliday junction (HJ) complex. HJ DNA is sandwiched between 2 RuvA tetramers; dsDNA enters through RuvA and exits via RuvB. An RuvB hexamer assembles on each DNA strand where it exits the tetramer. Each RuvB hexamer is contacted by two RuvA subunits (via domain III) on 2 adjacent RuvB subunits; this complex drives branch migration. In the full resolvosome a probable DNA-RuvA(4)-RuvB(12)-RuvC(2) complex forms which resolves the HJ.

It is found in the cytoplasm. Functionally, the RuvA-RuvB-RuvC complex processes Holliday junction (HJ) DNA during genetic recombination and DNA repair, while the RuvA-RuvB complex plays an important role in the rescue of blocked DNA replication forks via replication fork reversal (RFR). RuvA specifically binds to HJ cruciform DNA, conferring on it an open structure. The RuvB hexamer acts as an ATP-dependent pump, pulling dsDNA into and through the RuvAB complex. HJ branch migration allows RuvC to scan DNA until it finds its consensus sequence, where it cleaves and resolves the cruciform DNA. In Oenococcus oeni (strain ATCC BAA-331 / PSU-1), this protein is Holliday junction branch migration complex subunit RuvA.